Consider the following 526-residue polypeptide: Alpha-1,3-mannosyl-glycoprotein 4-beta-N-acetylglucosaminyltransferase A (526 aa).

The Cytoplasmic portion of the chain corresponds to 1–6 (MRLRNG). The chain crosses the membrane as a helical; Signal-anchor for type II membrane protein span at residues 7–27 (TVATALVFVTSFLTLSWYTTW). Residues 28-63 (QNGKEKLIAYQREFLALKERLRVAEHRISQRSSELN) are a coiled coil. Over 28-526 (QNGKEKLIAY…NEIHIKKVTS (499 aa)) the chain is Lumenal. Asn449 is a glycosylation site (N-linked (GlcNAc...) asparagine). A Phosphoserine modification is found at Ser465.

The protein belongs to the glycosyltransferase 54 family. Requires a divalent metal cation as cofactor. Post-translationally, N-glycosylated.

It localises to the golgi apparatus membrane. It is found in the secreted. It carries out the reaction N(4)-{beta-D-GlcNAc-(1-&gt;2)-alpha-D-Man-(1-&gt;3)-[beta-D-GlcNAc-(1-&gt;2)-alpha-D-Man-(1-&gt;6)]-beta-D-Man-(1-&gt;4)-beta-D-GlcNAc-(1-&gt;4)-beta-D-GlcNAc}-L-asparaginyl-[protein] + UDP-N-acetyl-alpha-D-glucosamine = N(4)-{beta-D-GlcNAc-(1-&gt;2)-[beta-D-GlcNAc-(1-&gt;4)]-alpha-D-Man-(1-&gt;3)-[beta-D-GlcNAc-(1-&gt;2)-alpha-D-Man-(1-&gt;6)]-beta-D-Man-(1-&gt;4)-beta-D-GlcNAc-(1-&gt;4)-beta-D-GlcNAc}-L-asparaginyl-[protein] + UDP + H(+). It catalyses the reaction an N(4)-{beta-D-GlcNAc-(1-&gt;2)-alpha-D-Man-(1-&gt;3)-[alpha-D-Man-(1-&gt;6)]-beta-D-Man-(1-&gt;4)-beta-D-GlcNAc-(1-&gt;4)-beta-D-GlcNAc}-L-asparaginyl-[protein] + UDP-N-acetyl-alpha-D-glucosamine = an N(4)-{beta-D-GlcNAc-(1-&gt;2)-[beta-D-GlcNAc-(1-&gt;4)]-alpha-D-Man-(1-&gt;3)-[alpha-D-Man-(1-&gt;6)]-beta-D-Man-(1-&gt;4)-beta-D-GlcNAc-(1-&gt;4)-beta-D-GlcNAc}-L-asparaginyl-[protein] + UDP + H(+). The enzyme catalyses an N(4)-{beta-D-GlcNAc-(1-&gt;2)-alpha-D-Man-(1-&gt;3)-[beta-D-GlcNAc-(1-&gt;2)-[beta-D-GlcNAc-(1-&gt;6)]-alpha-D-Man-(1-&gt;6)]-beta-D-Man-(1-&gt;4)-beta-D-GlcNAc-(1-&gt;4)-beta-D-GlcNAc}-L-asparaginyl-[protein] + UDP-N-acetyl-alpha-D-glucosamine = an N(4)-{beta-D-GlcNAc-(1-&gt;2)-[beta-D-GlcNAc-(1-&gt;4)]-alpha-D-Man-(1-&gt;3)-[beta-D-GlcNAc-(1-&gt;2)-[beta-D-GlcNAc-(1-&gt;6)]-alpha-D-Man-(1-&gt;6)]-beta-D-Man-(1-&gt;4)-beta-D-GlcNAc-(1-&gt;4)-beta-D-GlcNAc}-L-asparaginyl-[protein] + UDP + H(+). The catalysed reaction is an N(4)-{beta-D-GlcNAc-(1-&gt;2)-alpha-D-Man-(1-&gt;3)-[beta-D-GlcNAc-(1-&gt;2)-alpha-D-Man-(1-&gt;6)]-beta-D-Man-(1-&gt;4)-beta-D-GlcNAc-(1-&gt;4)-[alpha-L-Fuc-(1-&gt;6)]-beta-D-GlcNAc}-L-asparaginyl-[protein] + UDP-N-acetyl-alpha-D-glucosamine = N(4)-{beta-D-GlcNAc-(1-&gt;2)-[beta-D-GlcNAc-(1-&gt;4)]-alpha-D-Man-(1-&gt;3)-[beta-D-GlcNAc-(1-&gt;2)-alpha-D-Man-(1-&gt;6)]-beta-D-Man-(1-&gt;4)-beta-D-GlcNAc-(1-&gt;4)-[alpha-L-Fuc-(1-&gt;6)]-beta-D-GlcNAc}-asparaginyl-[protein] + UDP + H(+). It carries out the reaction an N(4)-{beta-D-GlcNAc-(1-&gt;2)-alpha-D-Man-(1-&gt;3)-[beta-D-Gal-(1-&gt;4)-beta-D-GlcNAc-(1-&gt;2)-alpha-D-Man-(1-&gt;6)]-beta-D-Man-(1-&gt;4)-beta-D-GlcNAc-(1-&gt;4)-beta-D-GlcNAc}-L-asparaginyl-[protein] + UDP-N-acetyl-alpha-D-glucosamine = an N(4)-{beta-D-GlcNAc-(1-&gt;2)-[beta-D-GlcNAc-(1-&gt;4)]-alpha-D-Man-(1-&gt;3)-[beta-D-Gal-(1-&gt;4)-beta-D-GlcNAc-(1-&gt;2)-alpha-D-Man-(1-&gt;6)]-beta-D-Man-(1-&gt;4)-beta-D-GlcNAc-(1-&gt;4)-beta-D-GlcNAc}-L-asparaginyl-[protein] + UDP + H(+). It catalyses the reaction N(4)-{beta-D-GlcNAc-(1-&gt;2)-alpha-D-Man-(1-&gt;3)-[alpha-D-Man-(1-&gt;3)-{alpha-D-Man-(1-&gt;6)}-alpha-D-Man-(1-&gt;6)]-beta-D-Man-(1-&gt;4)-beta-D-GlcNAc-(1-&gt;4)-beta-D-GlcNAc}-asparaginyl-[protein] + UDP-N-acetyl-alpha-D-glucosamine = N(4)-{beta-D-GlcNAc-(1-&gt;2)-[beta-D-GlcNAc-(1-&gt;4)]-alpha-D-Man-(1-&gt;3)-[alpha-D-Man-(1-&gt;3)-{alpha-D-Man-(1-&gt;6)}-alpha-D-Man-(1-&gt;6)]-beta-D-Man-(1-&gt;4)-beta-D-GlcNAc-(1-&gt;4)-beta-D-GlcNAc}-asparaginyl-[protein] + UDP + H(+). The enzyme catalyses N(4)-{beta-D-GlcNAc-(1-&gt;2)-alpha-D-Man-(1-&gt;3)-beta-D-Man-(1-&gt;4)-beta-D-GlcNAc-(1-&gt;4)-beta-D-GlcNAc}-asparaginyl-[protein] + UDP-N-acetyl-alpha-D-glucosamine = N(4)-{beta-D-GlcNAc-(1-&gt;2)-[beta-D-GlcNAc-(1-&gt;4)]-alpha-D-Man-(1-&gt;3)-beta-D-Man-(1-&gt;4)-beta-D-GlcNAc-(1-&gt;4)-beta-D-GlcNAc}-asparaginyl-[protein] + UDP + H(+). Its pathway is protein modification; protein glycosylation. Inhibited by UDP. In terms of biological role, glycosyltransferase that catalyze the transfer of GlcNAc from UDP-GlcNAc to the GlcNAcbeta1-2Manalpha1-3 arm of the core structure of N-linked glycans through a beta1-4 linkage and participates in the production of tri- and tetra-antennary N-linked sugar chains. Involved in glucose transport by mediating SLC2A2/GLUT2 glycosylation, thereby controlling cell-surface expression of SLC2A2 in pancreatic beta cells. The chain is Alpha-1,3-mannosyl-glycoprotein 4-beta-N-acetylglucosaminyltransferase A from Rattus norvegicus (Rat).